Here is a 95-residue protein sequence, read N- to C-terminus: Aspartyl/glutamyl-tRNA(Asn/Gln) amidotransferase subunit C (95 aa).

Belongs to the GatC family. Heterotrimer of A, B and C subunits.

It carries out the reaction L-glutamyl-tRNA(Gln) + L-glutamine + ATP + H2O = L-glutaminyl-tRNA(Gln) + L-glutamate + ADP + phosphate + H(+). The catalysed reaction is L-aspartyl-tRNA(Asn) + L-glutamine + ATP + H2O = L-asparaginyl-tRNA(Asn) + L-glutamate + ADP + phosphate + 2 H(+). In terms of biological role, allows the formation of correctly charged Asn-tRNA(Asn) or Gln-tRNA(Gln) through the transamidation of misacylated Asp-tRNA(Asn) or Glu-tRNA(Gln) in organisms which lack either or both of asparaginyl-tRNA or glutaminyl-tRNA synthetases. The reaction takes place in the presence of glutamine and ATP through an activated phospho-Asp-tRNA(Asn) or phospho-Glu-tRNA(Gln). The sequence is that of Aspartyl/glutamyl-tRNA(Asn/Gln) amidotransferase subunit C from Campylobacter concisus (strain 13826).